Reading from the N-terminus, the 495-residue chain is Glycerol kinase (495 aa).

Residue Thr-11 coordinates ADP. Thr-11, Thr-12, and Ser-13 together coordinate ATP. Thr-11 contacts sn-glycerol 3-phosphate. Arg-81, Glu-82, Tyr-133, and Asp-242 together coordinate sn-glycerol 3-phosphate. Positions 81, 82, 133, 242, and 243 each coordinate glycerol. ADP-binding residues include Thr-264, Gly-307, Gly-407, and Asn-411. ATP-binding residues include Thr-264, Gly-307, and Gly-407.

It belongs to the FGGY kinase family.

It catalyses the reaction glycerol + ATP = sn-glycerol 3-phosphate + ADP + H(+). It functions in the pathway polyol metabolism; glycerol degradation via glycerol kinase pathway; sn-glycerol 3-phosphate from glycerol: step 1/1. Its activity is regulated as follows. Inhibited by fructose 1,6-bisphosphate (FBP). Its function is as follows. Key enzyme in the regulation of glycerol uptake and metabolism. Catalyzes the phosphorylation of glycerol to yield sn-glycerol 3-phosphate. The protein is Glycerol kinase of Thermus brockianus.